Reading from the N-terminus, the 507-residue chain is Proton-coupled zinc antiporter SLC30A1 (507 aa).

Topologically, residues 1–10 are cytoplasmic; it reads MGCWGRNRGR. Residues 11–31 form a helical membrane-spanning segment; the sequence is LLCMLLLTFMFMVLEVVVSRV. Topologically, residues 32 to 35 are extracellular; it reads TASL. Residues 36-56 traverse the membrane as a helical segment; the sequence is AMLSDSFHMLSDVLALVVALV. Zn(2+) is bound by residues His43 and Asp47. Residues 57 to 78 are Cytoplasmic-facing; that stretch reads AERFARRTHATQKNTFGWIRAE. Residues 79-99 form a helical membrane-spanning segment; that stretch reads VMGALVNAIFLTGLCFAILLE. Over 100–113 the chain is Extracellular; that stretch reads AVERFIEPHEMQQP. A helical membrane pass occupies residues 114 to 134; that stretch reads LVVLSVGVAGLLVNVLGLCLF. Residues 135–247 are Cytoplasmic-facing; sequence HHHSGEGQGA…RAGQLNMRGV (113 aa). Residues 140–218 form a disordered region; that stretch reads EGQGAGHGHS…EKLRSDDPVD (79 aa). The interval 145 to 156 is 6 X 2 AA approximate repeats of H-G; the sequence is GHGHSHGHGHGH. The segment covering 147 to 165 has biased composition (basic residues); it reads GHSHGHGHGHLAKGARKAG. Polar residues predominate over residues 188–200; it reads TNTLVANTSNSNG. Basic and acidic residues predominate over residues 204–215; it reads DQAEPEKLRSDD. A helical transmembrane segment spans residues 248–268; that stretch reads FLHVLGDALGSVIVVVNALVF. Residues His250 and Asp254 each coordinate Zn(2+). The Extracellular segment spans residues 269-307; sequence YFSWKGCTEDDFCVNPCFPDPCKSSVELMNSTQAPMHEA. Asn298 is a glycosylation site (N-linked (GlcNAc...) asparagine). A helical membrane pass occupies residues 308–328; sequence GPCWVLYLDPTLCIIMVCILL. The Cytoplasmic portion of the chain corresponds to 329–507; it reads YTTYPLLKES…VPNKQPESSL (179 aa). Ser506 is subject to Phosphoserine.

Belongs to the cation diffusion facilitator (CDF) transporter (TC 2.A.4) family. SLC30A subfamily. Homodimer. Interacts with TMEM163. Interacts and forms a complex with TMC6 and TMC8; the interaction regulates zinc transport into the ER. In terms of tissue distribution, widely expressed. Detected in duodenum and jejunum but not in ileum and colon (at protein level). Expressed by neuroglial cells (at protein level).

The protein localises to the cell membrane. It is found in the basolateral cell membrane. It localises to the cytoplasmic vesicle membrane. The protein resides in the cytoplasm. Its subcellular location is the endoplasmic reticulum membrane. The protein localises to the golgi apparatus membrane. It is found in the nucleus membrane. The catalysed reaction is Zn(2+)(in) + 2 H(+)(out) = Zn(2+)(out) + 2 H(+)(in). With respect to regulation, calcium-dependent. In terms of biological role, zinc ion:proton antiporter that could function at the plasma membrane mediating zinc efflux from cells against its electrochemical gradient protecting them from intracellular zinc accumulation and toxicity. Alternatively, could prevent the transport to the plasma membrane of CACNB2, the L-type calcium channels regulatory subunit, through a yet to be defined mechanism. By modulating the expression of these channels at the plasma membrane, could prevent calcium and zinc influx into cells. By the same mechanism, could also prevent L-type calcium channels-mediated heavy metal influx into cells. In some cells, could also function as a zinc ion:proton antiporter mediating zinc entry into the lumen of cytoplasmic vesicles. In macrophages, can increase zinc ions concentration into the lumen of cytoplasmic vesicles containing engulfed bacteria and could help inactivate them. Forms a complex with TMC6/EVER1 and TMC8/EVER2 at the ER membrane of keratynocytes which facilitates zinc uptake into the ER. Down-regulates the activity of transcription factors induced by zinc and cytokines. This Rattus norvegicus (Rat) protein is Proton-coupled zinc antiporter SLC30A1.